Here is a 128-residue protein sequence, read N- to C-terminus: Large ribosomal subunit protein mL51 (128 aa).

A mitochondrion-targeting transit peptide spans 1–31 (MAGSLSWVAGRRLWGLVPLACRSFFLGVPRL).

Belongs to the mitochondrion-specific ribosomal protein mL51 family. Component of the mitochondrial ribosome large subunit (39S) which comprises a 16S rRNA and about 50 distinct proteins. Interacts with OXA1L.

It localises to the mitochondrion. The protein is Large ribosomal subunit protein mL51 (MRPL51) of Bos taurus (Bovine).